Consider the following 515-residue polypeptide: ADP,ATP carrier protein 1 (515 aa).

The next 12 helical transmembrane spans lie at L24–L44, A62–Y82, A93–I113, E124–L144, F149–W169, F184–V204, L226–N246, Y286–V306, F329–I349, A358–F378, S383–I403, and I465–V485.

It belongs to the ADP/ATP translocase tlc family.

Its subcellular location is the cell membrane. The sequence is that of ADP,ATP carrier protein 1 (tlcA) from Chlamydia pneumoniae (Chlamydophila pneumoniae).